The chain runs to 119 residues: Holo-[acyl-carrier-protein] synthase (119 aa).

The Mg(2+) site is built by aspartate 8 and glutamate 58.

The protein belongs to the P-Pant transferase superfamily. AcpS family. Requires Mg(2+) as cofactor.

It is found in the cytoplasm. The catalysed reaction is apo-[ACP] + CoA = holo-[ACP] + adenosine 3',5'-bisphosphate + H(+). In terms of biological role, transfers the 4'-phosphopantetheine moiety from coenzyme A to a Ser of acyl-carrier-protein. This is Holo-[acyl-carrier-protein] synthase from Streptococcus suis (strain 05ZYH33).